Reading from the N-terminus, the 300-residue chain is 5'-adenylylsulfate reductase-like 5 (300 aa).

The N-terminal stretch at 1 to 23 (MDSRVSILFVCAIAVSCFTSGSA) is a signal peptide. Residues 41 to 161 (FDLEAKCPPS…LIEFYEEATG (121 aa)) enclose the Thioredoxin domain. N136 is a glycosylation site (N-linked (GlcNAc...) asparagine). The helical transmembrane segment at 202-222 (FLVLSLLFICLQMAILVFPIA) threads the bilayer.

Its subcellular location is the membrane. The sequence is that of 5'-adenylylsulfate reductase-like 5 (APRL5) from Arabidopsis thaliana (Mouse-ear cress).